The chain runs to 138 residues: Basic phospholipase A2 homolog TM-N49 (138 aa).

The N-terminal stretch at 1–16 is a signal peptide; that stretch reads MRTLWIMAVLLLGVEG. 7 disulfides stabilise this stretch: C42-C131, C44-C60, C59-C111, C65-C138, C66-C104, C73-C97, and C91-C102.

This sequence belongs to the phospholipase A2 family. Group II subfamily. N49 sub-subfamily. As to quaternary structure, homodimer; non-covalently linked. Expressed by the venom gland.

The protein localises to the secreted. In terms of biological role, snake venom phospholipase A2 (PLA2) that exhibits potent myotoxic activity causing inflammatory cell infiltration, severe myoedema, myonecrosis and myolysis in the gastrocnemius muscles of BALB/c mice. The protein is Basic phospholipase A2 homolog TM-N49 of Protobothrops mucrosquamatus (Taiwan habu).